Here is a 432-residue protein sequence, read N- to C-terminus: Gamma-glutamyl phosphate reductase (432 aa).

This sequence belongs to the gamma-glutamyl phosphate reductase family.

It localises to the cytoplasm. The enzyme catalyses L-glutamate 5-semialdehyde + phosphate + NADP(+) = L-glutamyl 5-phosphate + NADPH + H(+). The protein operates within amino-acid biosynthesis; L-proline biosynthesis; L-glutamate 5-semialdehyde from L-glutamate: step 2/2. Its function is as follows. Catalyzes the NADPH-dependent reduction of L-glutamate 5-phosphate into L-glutamate 5-semialdehyde and phosphate. The product spontaneously undergoes cyclization to form 1-pyrroline-5-carboxylate. This is Gamma-glutamyl phosphate reductase from Methylorubrum populi (strain ATCC BAA-705 / NCIMB 13946 / BJ001) (Methylobacterium populi).